Reading from the N-terminus, the 113-residue chain is Small ribosomal subunit protein bS6 (113 aa).

The protein belongs to the bacterial ribosomal protein bS6 family.

In terms of biological role, binds together with bS18 to 16S ribosomal RNA. This chain is Small ribosomal subunit protein bS6, found in Flavobacterium psychrophilum (strain ATCC 49511 / DSM 21280 / CIP 103535 / JIP02/86).